The chain runs to 489 residues: 3-octaprenyl-4-hydroxybenzoate carboxy-lyase (489 aa).

Residue N172 participates in Mn(2+) binding. Residues 175-177 (IYR), 189-191 (RWL), and 194-195 (RG) each bind prenylated FMN. E238 lines the Mn(2+) pocket. D287 acts as the Proton donor in catalysis.

This sequence belongs to the UbiD family. Homohexamer. Prenylated FMN serves as cofactor. Mn(2+) is required as a cofactor.

The protein localises to the cell membrane. The enzyme catalyses a 4-hydroxy-3-(all-trans-polyprenyl)benzoate + H(+) = a 2-(all-trans-polyprenyl)phenol + CO2. It functions in the pathway cofactor biosynthesis; ubiquinone biosynthesis. Catalyzes the decarboxylation of 3-octaprenyl-4-hydroxy benzoate to 2-octaprenylphenol, an intermediate step in ubiquinone biosynthesis. This chain is 3-octaprenyl-4-hydroxybenzoate carboxy-lyase, found in Psychromonas ingrahamii (strain DSM 17664 / CCUG 51855 / 37).